A 322-amino-acid polypeptide reads, in one-letter code: DNA-directed RNA polymerase subunit alpha (322 aa).

Positions 1-229 (MNFVNNLFTL…KYFDLIFSFI (229 aa)) are alpha N-terminal domain (alpha-NTD). An alpha C-terminal domain (alpha-CTD) region spans residues 244–322 (NLNLKINSVY…NLNSKIEYDL (79 aa)).

This sequence belongs to the RNA polymerase alpha chain family. Homodimer. The RNAP catalytic core consists of 2 alpha, 1 beta, 1 beta' and 1 omega subunit. When a sigma factor is associated with the core the holoenzyme is formed, which can initiate transcription.

The catalysed reaction is RNA(n) + a ribonucleoside 5'-triphosphate = RNA(n+1) + diphosphate. DNA-dependent RNA polymerase catalyzes the transcription of DNA into RNA using the four ribonucleoside triphosphates as substrates. In Carsonella ruddii (strain PV), this protein is DNA-directed RNA polymerase subunit alpha (rpoA).